The following is a 951-amino-acid chain: Zinc fingers and homeoboxes protein 3 (951 aa).

The segment at M1–N66 is disordered. Residues M1 to P107 form a required for nuclear localization region. Low complexity predominate over residues P42–S58. 2 C2H2-type zinc fingers span residues Y77–H100 and F109–H132. The interval T227–P252 is disordered. A required for homodimerization and interaction with NFYA region spans residues A238–S483. The segment at L299–S497 is required for repressor activity. 2 DNA-binding regions (homeobox) span residues S300–W359 and A489–K548. The segment at Y492–S550 is required for nuclear localization. S599 bears the Phosphoserine mark. Residues T607 to E666 constitute a DNA-binding region (homeobox 3). The segment covering V662–K676 has biased composition (basic and acidic residues). Residues V662–E690 are disordered. Residues E677–E690 are compositionally biased toward acidic residues. Residues S703 and S718 each carry the phosphoserine modification. 2 DNA-binding regions (homeobox) span residues P759 to Q818 and F830 to V889. Residues S916 to D951 form a disordered region. Residues S919–P936 show a composition bias toward low complexity. Phosphoserine occurs at positions 922 and 941. Residues F937–D951 show a composition bias toward polar residues.

Belongs to the ZHX family. As to quaternary structure, homodimer (via homeobox domain 1). Heterodimer with ZHX1 (via homeobox domain 1). Heterodimer with ZHX2 (via homeobox domain 1). Heterodimerization with ZHX1 is a prerequisite for repressor activity. Interacts with NFYA. Ubiquitously expressed.

Its subcellular location is the nucleus. Acts as a transcriptional repressor. Involved in the early stages of mesenchymal stem cell (MSC) osteogenic differentiation. Is a regulator of podocyte gene expression during primary glomerula disease. Binds to promoter DNA. The sequence is that of Zinc fingers and homeoboxes protein 3 (Zhx3) from Mus musculus (Mouse).